The following is a 124-amino-acid chain: Succinate dehydrogenase cytochrome b556 subunit (124 aa).

The Cytoplasmic segment spans residues 1–29; the sequence is MTKIKQEIYNKRPTSPHLTIYKPQISSTL. Residues 30-55 traverse the membrane as a helical segment; that stretch reads SILHRMTGVALFFVVSILVWWLILSK. Residues 56-67 lie on the Periplasmic side of the membrane; the sequence is YDNNYLQLASCC. Residues 68 to 88 traverse the membrane as a helical segment; sequence IIKICLVAFSYSWCYHLCNGI. Residue H83 coordinates heme. Residues 89-103 are Cytoplasmic-facing; the sequence is RHLFWDIGYGFSIKA. Residues 104–124 traverse the membrane as a helical segment; the sequence is VNITGWCVVVCSILLTMLLWV.

This sequence belongs to the cytochrome b560 family. Part of an enzyme complex containing four subunits: a flavoprotein, an iron-sulfur protein, plus two membrane-anchoring proteins, SdhC and SdhD. The complex can form homotrimers. Heme serves as cofactor.

It localises to the cell inner membrane. It functions in the pathway carbohydrate metabolism; tricarboxylic acid cycle. Functionally, membrane-anchoring subunit of succinate dehydrogenase (SDH). This Rickettsia prowazekii (strain Madrid E) protein is Succinate dehydrogenase cytochrome b556 subunit (sdhC).